We begin with the raw amino-acid sequence, 314 residues long: MKKEDKDWIELTIITSSQAVEAVSAILYNTDVQGIAIEDSKDVEFQKKNKGDWDYFDETLINIEEGAVIKAYYREDKNFMKYLKYIEESVKNLEQLGFDKGKGIVTTSKVNEEDWENNWKKYYKPTKVGEKIVIKPIWEEYGENPEEIILELDPGMAFGTGTHETTRMCIESLEKYVKEEDVVFDIGTGSGILGIAAAKLNAKKVIGVDLDEVAVDSAKKNVGFNHLDNIEILHGDLMEVVKGKCNIIVANIIADIIILLSKDVKKFLEDGGYFISSGIIKDRKEEVVDSLKENGFKIEEIKEQGEWVCVVASL.

Residues Thr166, Gly187, Asp209, and Asn251 each coordinate S-adenosyl-L-methionine.

Belongs to the methyltransferase superfamily. PrmA family.

It localises to the cytoplasm. The enzyme catalyses L-lysyl-[protein] + 3 S-adenosyl-L-methionine = N(6),N(6),N(6)-trimethyl-L-lysyl-[protein] + 3 S-adenosyl-L-homocysteine + 3 H(+). Functionally, methylates ribosomal protein L11. The sequence is that of Ribosomal protein L11 methyltransferase from Clostridium tetani (strain Massachusetts / E88).